A 936-amino-acid chain; its full sequence is Sine oculis-binding protein homolog A (936 aa).

Positions 1–14 are enriched in basic and acidic residues; the sequence is MAEMEKEGRPPESK. Disordered stretches follow at residues 1–46 and 108–151; these read MAEM…GQAG and ASTL…HGGL. Positions 108-144 are enriched in polar residues; that stretch reads ASTLENSSGSPPHANSSGSTPTSRNGVTAESSVNPSS. FCS-type zinc fingers lie at residues 169–207 and 247–287; these read EDSS…KCFA and LKTN…KCLN. Disordered stretches follow at residues 311 to 330, 336 to 424, 486 to 511, 574 to 632, 697 to 727, and 842 to 877; these read LPTS…LTPE, LSEL…VMTP, SPHL…HPAA, NPQR…KQTE, PPPA…DTYS, and DSAG…EDHA. Residues 349-382 show a composition bias toward low complexity; that stretch reads GATIAGPSGSTSGSPSEAGTVCSSSSSSSSSSSS. The span at 395-404 shows a compositional bias: pro residues; it reads SLPPPHPPPI. Composition is skewed to polar residues over residues 617-632, 708-717, and 850-859; these read PPNS…KQTE, DGSTSISTGT, and NDQSAITTGT.

This sequence belongs to the SOBP family.

Its function is as follows. Implicated in development of the cochlea. The protein is Sine oculis-binding protein homolog A (sobpa) of Danio rerio (Zebrafish).